A 266-amino-acid chain; its full sequence is Apolipoprotein A-I (266 aa).

Residues 1–18 (MKAVVLTLAVLFLTGSQA) form the signal peptide. 2 tandem repeats follow at residues 67–88 (LKLL…EQLG) and 89–110 (PVTQ…QEMN). The tract at residues 67–266 (LKLLDNWDSL…EEASKKLNAQ (200 aa)) is 10 X approximate tandem repeats. Met-109 bears the Methionine sulfoxide mark. The 3; half-length repeat unit spans residues 111–121 (KDVEEMKTKVQ). Tandem repeats lie at residues 122–143 (PYLD…QKVE), 144–165 (PLGS…EKLS), 166–187 (PLGE…TQLA), 188–209 (PYSE…ESGG), and 210–231 (ASLA…EKAK). The stretch at 232–242 (PALEDLRQGLL) is one 9; half-length repeat. Repeat unit 10 spans residues 243–266 (PVLESFKVSLLSALEEASKKLNAQ).

This sequence belongs to the apolipoprotein A1/A4/E family. As to quaternary structure, homodimer. Interacts with APOA1BP and CLU. Component of a sperm activating protein complex (SPAP), consisting of APOA1, an immunoglobulin heavy chain, an immunoglobulin light chain and albumin. Interacts with NDRG1. Interacts with SCGB3A2. Interacts with NAXE and YJEFN3. Glycosylated. In terms of processing, palmitoylated. Post-translationally, phosphorylation sites are present in the extracellular medium. Major protein of plasma HDL, also found in chylomicrons.

The protein localises to the secreted. In terms of biological role, participates in the reverse transport of cholesterol from tissues to the liver for excretion by promoting cholesterol efflux from tissues and by acting as a cofactor for the lecithin cholesterol acyltransferase (LCAT). As part of the SPAP complex, activates spermatozoa motility. The chain is Apolipoprotein A-I (APOA1) from Carlito syrichta (Philippine tarsier).